We begin with the raw amino-acid sequence, 173 residues long: ADP-ribose 1''-phosphate phosphatase (173 aa).

The 173-residue stretch at 1-173 folds into the Macro domain; that stretch reads MIRYIKGDLL…YDVEFNVYVI (173 aa). Substrate-binding positions include 7–9, 26–28, 33–38, and 145–151; these read GDL, ACN, WGGGIA, and INAGIFA.

It belongs to the POA1 family.

The enzyme catalyses ADP-alpha-D-ribose 1''-phosphate + H2O = ADP-D-ribose + phosphate. Its function is as follows. Highly specific phosphatase involved in the metabolism of ADP-ribose 1''-phosphate (Appr1p) which is produced as a consequence of tRNA splicing. The chain is ADP-ribose 1''-phosphate phosphatase (POA1) from Scheffersomyces stipitis (strain ATCC 58785 / CBS 6054 / NBRC 10063 / NRRL Y-11545) (Yeast).